Reading from the N-terminus, the 339-residue chain is tRNA N6-adenosine threonylcarbamoyltransferase (339 aa).

Histidine 114 and histidine 118 together coordinate Fe cation. Substrate-binding positions include 137–141 (VVSGG), aspartate 170, glycine 183, aspartate 187, and asparagine 277. Aspartate 305 lines the Fe cation pocket.

This sequence belongs to the KAE1 / TsaD family. Fe(2+) serves as cofactor.

Its subcellular location is the cytoplasm. It catalyses the reaction L-threonylcarbamoyladenylate + adenosine(37) in tRNA = N(6)-L-threonylcarbamoyladenosine(37) in tRNA + AMP + H(+). Required for the formation of a threonylcarbamoyl group on adenosine at position 37 (t(6)A37) in tRNAs that read codons beginning with adenine. Is involved in the transfer of the threonylcarbamoyl moiety of threonylcarbamoyl-AMP (TC-AMP) to the N6 group of A37, together with TsaE and TsaB. TsaD likely plays a direct catalytic role in this reaction. The protein is tRNA N6-adenosine threonylcarbamoyltransferase of Clostridium perfringens (strain SM101 / Type A).